The chain runs to 270 residues: Replication protein A 32 kDa subunit (270 aa).

M1 carries the post-translational modification N-acetylmethionine. Residues S4 and S8 each carry the phosphoserine; by PRKDC modification. At T21 the chain carries Phosphothreonine; by PRKDC. The segment at Q22–A41 is disordered. A Phosphoserine; by CDK2 modification is found at S23. S29 is modified (phosphoserine; by CDK1). Position 33 is a phosphoserine; by PRKDC (S33). Glycyl lysine isopeptide (Lys-Gly) (interchain with G-Cter in ubiquitin) cross-links involve residues K37 and K38. A DNA-binding region (OB) is located at residues V74 to P148. The tract at residues G187 to E270 is interaction with RAD52, TIPIN, UNG and XPA.

This sequence belongs to the replication factor A protein 2 family. In terms of assembly, component of the replication protein A complex (RPA/RP-A), a heterotrimeric complex composed of RPA1, RPA2 and RPA3. Interacts with PRPF19; the PRP19-CDC5L complex is recruited to the sites of DNA repair where it ubiquitinates the replication protein A complex (RPA). Interacts with SERTAD3. Interacts with TIPIN. Interacts with TIMELESS. Interacts with PPP4R2; the interaction is direct, DNA damage-dependent and mediates the recruitment of the PP4 catalytic subunit PPP4C. Interacts (hyperphosphorylated) with RAD51. Interacts with SMARCAL1; the interaction is direct and mediates the recruitment to the RPA complex of SMARCAL1. Interacts with RAD52 and XPA; those interactions are direct and associate RAD52 and XPA to the RPA complex. Interacts with FBH1. Interacts with ETAA1; the interaction is direct and promotes ETAA1 recruitment at stalled replication forks. Interacts with DDI2. Interacts (in unphosphorylated form via N-terminus) with EIF4EBP3; the interaction enhances EIF4EBP3-mediated inhibition of EIF4E-mediated mRNA nuclear export. Interacts with nuclear UNG (isoform 2); this interaction mediates UNG recruitment to RPA-coated single-stranded DNA at stalled replication forks. In terms of processing, differentially phosphorylated throughout the cell cycle, becoming phosphorylated at the G1-S transition and dephosphorylated in late mitosis. Mainly phosphorylated at Ser-23 and Ser-29, by cyclin A-CDK2 and cyclin B-CDK1, respectively during DNA replication and mitosis. Dephosphorylation may require the serine/threonine-protein phosphatase 4. Phosphorylation at Ser-23 and Ser-29 is a prerequisite for further phosphorylation. Becomes hyperphosphorylated on additional residues including Ser-4, Ser-8, Thr-21 and Ser-33 in response to DNA damage. Hyperphosphorylation is mediated by ATM, ATR and PRKDC. Primarily recruited to DNA repair nuclear foci as a hypophosphorylated form it undergoes subsequent hyperphosphorylation, catalyzed by ATR. Hyperphosphorylation is required for RAD51 recruitment to chromatin and efficient DNA repair. Phosphorylation at Thr-21 depends upon RFWD3 presence. DNA damage-induced 'Lys-63'-linked polyubiquitination by PRPF19 mediates ATRIP recruitment to the RPA complex at sites of DNA damage and activation of ATR. Ubiquitinated by RFWD3 at stalled replication forks in response to DNA damage: ubiquitination by RFWD3 does not lead to degradation by the proteasome and promotes removal of the RPA complex from stalled replication forks, promoting homologous recombination.

It is found in the nucleus. The protein resides in the PML body. Functionally, as part of the heterotrimeric replication protein A complex (RPA/RP-A), binds and stabilizes single-stranded DNA intermediates, that form during DNA replication or upon DNA stress. It prevents their reannealing and in parallel, recruits and activates different proteins and complexes involved in DNA metabolism. Thereby, it plays an essential role both in DNA replication and the cellular response to DNA damage. In the cellular response to DNA damage, the RPA complex controls DNA repair and DNA damage checkpoint activation. Through recruitment of ATRIP activates the ATR kinase a master regulator of the DNA damage response. It is required for the recruitment of the DNA double-strand break repair factors RAD51 and RAD52 to chromatin in response to DNA damage. Also recruits to sites of DNA damage proteins like XPA and XPG that are involved in nucleotide excision repair and is required for this mechanism of DNA repair. Also plays a role in base excision repair (BER) probably through interaction with UNG. Also recruits SMARCAL1/HARP, which is involved in replication fork restart, to sites of DNA damage. May also play a role in telomere maintenance. This is Replication protein A 32 kDa subunit (Rpa2) from Rattus norvegicus (Rat).